Here is a 271-residue protein sequence, read N- to C-terminus: Tryptophan synthase alpha chain (271 aa).

Active-site proton acceptor residues include Glu47 and Asp58.

Belongs to the TrpA family. Tetramer of two alpha and two beta chains.

The enzyme catalyses (1S,2R)-1-C-(indol-3-yl)glycerol 3-phosphate + L-serine = D-glyceraldehyde 3-phosphate + L-tryptophan + H2O. It participates in amino-acid biosynthesis; L-tryptophan biosynthesis; L-tryptophan from chorismate: step 5/5. The alpha subunit is responsible for the aldol cleavage of indoleglycerol phosphate to indole and glyceraldehyde 3-phosphate. In Thermus thermophilus (strain ATCC BAA-163 / DSM 7039 / HB27), this protein is Tryptophan synthase alpha chain.